The primary structure comprises 404 residues: Glycosylated lysosomal membrane protein (404 aa).

The N-terminal stretch at 1–26 (MSGYEKPSRGWGFCALSPVLLSLLMA) is a signal peptide. The Lumenal portion of the chain corresponds to 27-370 (APLGLLGEET…VDALSPLVLG (344 aa)). N-linked (GlcNAc...) asparagine glycans are attached at residues Asn-63, Asn-132, Asn-157, Asn-185, and Asn-228. A helical transmembrane segment spans residues 371-391 (IMAVALGAPALMLLAGGLFLL). Residues 392–404 (LGRKRDSEYQSIN) lie on the Cytoplasmic side of the membrane. The short motif at 400 to 404 (YQSIN) is the Lysosomal targeting motif element.

The protein belongs to the GLMP family. In terms of assembly, interacts (via lumenal domain) with lysosomal protein MFSD1; the interaction starts while both proteins are still in the endoplasmic reticulum and is required for stabilization of MFSD1 in lysosomes but has no direct effect on its targeting to lysosomes or transporter activity. Highly N-glycosylated. N-glycosylation is essential for GLMP stability and for MFSD1 lysosomal localization.

It is found in the lysosome membrane. Its function is as follows. Required to protect lysosomal transporter MFSD1 from lysosomal proteolysis and for MFSD1 lysosomal localization. This is Glycosylated lysosomal membrane protein from Bos taurus (Bovine).